The sequence spans 586 residues: MVEHGGTDSMWLNKYNPAAASSASSSSSSDAENKLFSRLKVSLTKKYPQKNAELLSAQYGTNLLLLGVSVMLALAAQSGPVKEEHLLSFITVLMLVQLVWMLCYMIRRERERSPVPERDAHAGASWIRGGLTMLALLSLIMDAFRIGYFVGYHSCISAALGVYPIVHALHTISQVHFLWFHIKDVIKKYETFERFGVIHAVFTNLLLWCNGVMSETEHFMHNHRRRLIEMGYANLSTVDVQPHCNCTTSVCSMFSTSLYYLYPFNIEYHIFVSAMLFVMWKNIGRTLDRHSNRKRRSTGSTGLLLGPLGGLVALASSVSVLVVYLIHLEKTEEMHEAAVSMFYYYGVAMMACMCVGSGTGLLVYRMENRPMDTGSNPARTLDTELLLASSLGSWLMSWCSVVASVAEAGQKSPSFSWTSLTYSLLLVLEKCIQNLFIVESLYRRHSEEEEDAAAPQVFSVAVPPYDGILNHGYEAHDKHREAEPAAGSHALSRKQPDAPLPAGQRLDVTPGRKRQILKNICMFLFMCNISLWILPAFGCRPQYDNPLENETFGTSVWTTVLNVAIPLNLFYRMHSVASLFEVFRKV.

Residues 1–52 (MVEHGGTDSMWLNKYNPAAASSASSSSSSDAENKLFSRLKVSLTKKYPQKNA) are Cytoplasmic-facing. A helical membrane pass occupies residues 53–74 (ELLSAQYGTNLLLLGVSVMLAL). Residues 75–82 (AAQSGPVK) are Extracellular-facing. Residues 83–106 (EEHLLSFITVLMLVQLVWMLCYMI) form a helical membrane-spanning segment. Over 107-124 (RRERERSPVPERDAHAGA) the chain is Cytoplasmic. The helical transmembrane segment at 125–147 (SWIRGGLTMLALLSLIMDAFRIG) threads the bilayer. Residues 148 to 157 (YFVGYHSCIS) lie on the Extracellular side of the membrane. The helical transmembrane segment at 158-182 (AALGVYPIVHALHTISQVHFLWFHI) threads the bilayer. Residues 183 to 190 (KDVIKKYE) are Cytoplasmic-facing. The helical transmembrane segment at 191 to 217 (TFERFGVIHAVFTNLLLWCNGVMSETE) threads the bilayer. The Extracellular portion of the chain corresponds to 218 to 255 (HFMHNHRRRLIEMGYANLSTVDVQPHCNCTTSVCSMFS). A helical transmembrane segment spans residues 256-281 (TSLYYLYPFNIEYHIFVSAMLFVMWK). Residues 282–303 (NIGRTLDRHSNRKRRSTGSTGL) are Cytoplasmic-facing. A helical membrane pass occupies residues 304–326 (LLGPLGGLVALASSVSVLVVYLI). The Extracellular segment spans residues 327 to 336 (HLEKTEEMHE). A helical transmembrane segment spans residues 337–362 (AAVSMFYYYGVAMMACMCVGSGTGLL). Residues 363 to 380 (VYRMENRPMDTGSNPART) lie on the Cytoplasmic side of the membrane. The helical transmembrane segment at 381–405 (LDTELLLASSLGSWLMSWCSVVASV) threads the bilayer. Topologically, residues 406–417 (AEAGQKSPSFSW) are extracellular. The chain crosses the membrane as a helical span at residues 418-438 (TSLTYSLLLVLEKCIQNLFIV). The Cytoplasmic segment spans residues 439–518 (ESLYRRHSEE…TPGRKRQILK (80 aa)). Residues 484-505 (PAAGSHALSRKQPDAPLPAGQR) form a disordered region. A helical membrane pass occupies residues 519–537 (NICMFLFMCNISLWILPAF). Over 538–555 (GCRPQYDNPLENETFGTS) the chain is Extracellular. Residues 556–579 (VWTTVLNVAIPLNLFYRMHSVASL) form a helical membrane-spanning segment. The Cytoplasmic portion of the chain corresponds to 580 to 586 (FEVFRKV).

The protein belongs to the otopetrin family. In terms of assembly, homodimer.

The protein localises to the cell membrane. The protein resides in the cell projection. It is found in the microvillus. It catalyses the reaction H(+)(in) = H(+)(out). Activated by both acid and alkali, with proton influx in response to extracellular acid and proton efflux during alkali stimulation. Inhibited by Zn(2+); this inhibition is thought to be pH-sensitive. Currents evoked in response to mild acid (pH 6.0) stimulus may also be mildly potentiated by exposure to Zn(2+). Activated by NH(4)Cl. Functionally, proton-selective ion channel. Biphasically modulated by acid and alkali, mediating proton influx and efflux in response to extracellular acid and base stimulation, respectively. May be involved in acid and base perception. Sensor for ammonium chloride (NH(4)Cl) in taste receptor cells. NH(4)Cl acts by increasing the intracellular pH, thereby generating a driving force for proton entry through OTOP1 channel. Plays a role in the regulation of Ca(2+) flux in response to purigenic (ATP, ADP and UDP) stimuli, leading to increase in cytosolic Ca(2+) due to influx of extracellular calcium. May play this role by inhibiting P2Y purinoceptor-mediated Ca(2+) release in a Ca(2+)-dependent manner and promote an influx of Ca(2+) in response to ATP. Through this mechanism and possibly others, plays a role in the formation and function of calcium carbonate-based structures in the vestibular system of the inner ear, called otoconia, that sense gravity and linear acceleration. The polypeptide is Proton channel OTOP1 (Danio rerio (Zebrafish)).